The following is a 593-amino-acid chain: Mono(ADP-ribosyl)transferase SpvB (593 aa).

Residues 361-384 (PVNNMMPPPPPPPPPMMGGNSSRP) form a disordered region. Pro residues predominate over residues 366–376 (MPPPPPPPPPM). The TR mART core domain maps to 375-578 (PMMGGNSSRP…LRLSDDATAD (204 aa)). Residues arginine 473, serine 503, and glutamate 540 contribute to the active site.

Belongs to the SpvB family.

The protein localises to the secreted. It catalyses the reaction L-arginyl-[protein] + NAD(+) = N(omega)-(ADP-D-ribosyl)-L-arginyl-[protein] + nicotinamide + H(+). Its function is as follows. Mono-ADP-ribosylates muscle and non-muscle actin. ADP-ribosylates Chinese hamster ovary and HeLa cell actin as well as rabbit muscle, porcine heart actin and non-muscle beta- and gamma-actin. ADP-ribosylation of actin prevents the polymerization of G actin to F actin, causing actin filament depolymerization, destruction of the cytoskeleton and cytotoxicity; this requires only the C-terminal 120 residues. Does not possess NAD(+)-glycohydrolase activity, unlike most mART enzymes. This is Mono(ADP-ribosyl)transferase SpvB (spvB) from Salmonella dublin.